The sequence spans 457 residues: Argininosuccinate lyase (457 aa).

It belongs to the lyase 1 family. Argininosuccinate lyase subfamily.

The protein localises to the cytoplasm. The catalysed reaction is 2-(N(omega)-L-arginino)succinate = fumarate + L-arginine. It participates in amino-acid biosynthesis; L-arginine biosynthesis; L-arginine from L-ornithine and carbamoyl phosphate: step 3/3. The chain is Argininosuccinate lyase from Histophilus somni (strain 129Pt) (Haemophilus somnus).